The chain runs to 631 residues: MTIRILPPQLANQIAAGEVVERPASVIKELVENSLDAGATRVDIEIDKGGSKLIKITDNGSGIPKEELSLALSRHATSKLASLDDLDAILSFGFRGEALASISSVSRLTLTSRTQEQSEAWQAYAEGSEMAVRVIPAAHPVGSTVEAADLFFNTPARRRFLKSDKTEFTHIDEWLKRIALVRSEIHFTLKHNGKQVRNYRPAKTEAQYLQRLAQVSGKAFADNALRVDCNHNGLSLSGYIQSPFSEMAVGDTQYFYVNGRLVRDRLVNHAVRQAFAQQLQGEQVAFVLMLNLDPHQVDVNVHPAKHEVRFHESRYVHDFILQALESALRQSSELAFEAALDTQVTDQNRSASYIRPLQTQQSDTGSNQIAHGDTEENALWLANERPAYGEREASRQAGGQRVQETQMSSYGSGQSGGRGRSYASTELPSQAAVDSYAQLMTTPGVSSQANQADDSHLPPMPQVLDGQYWLLVRGSELALLSLSCAAREVTRREIEAKLDAGLIGQPLLMPVSVKVDEDWQQTLVERELLVRKLGLELTIRLGQLIIKKVPPYLRQSQLASVIPEFLQWIRFEEPTTEALVNWLVNQSGEQFNSASRLWAGLMGLPESQQQEILSLAKVMPWQTWLGEQTSE.

Residues 389–423 (GEREASRQAGGQRVQETQMSSYGSGQSGGRGRSYA) form a disordered region.

The protein belongs to the DNA mismatch repair MutL/HexB family.

Functionally, this protein is involved in the repair of mismatches in DNA. It is required for dam-dependent methyl-directed DNA mismatch repair. May act as a 'molecular matchmaker', a protein that promotes the formation of a stable complex between two or more DNA-binding proteins in an ATP-dependent manner without itself being part of a final effector complex. This is DNA mismatch repair protein MutL from Shewanella loihica (strain ATCC BAA-1088 / PV-4).